The following is a 166-amino-acid chain: Large ribosomal subunit protein uL11z (166 aa).

Belongs to the universal ribosomal protein uL11 family.

Its function is as follows. Binds directly to 26S ribosomal RNA. In Arabidopsis thaliana (Mouse-ear cress), this protein is Large ribosomal subunit protein uL11z (RPL12A).